Consider the following 443-residue polypeptide: ATP-dependent protease ATPase subunit HslU (443 aa).

ATP contacts are provided by residues Ile18 and 60-65 (GVGKTE). Positions 137–156 (PPPRDAWGQNEQSEDTSNTR) are disordered. The segment covering 145-156 (QNEQSEDTSNTR) has biased composition (polar residues). ATP-binding residues include Asp256, Glu321, and Arg393.

This sequence belongs to the ClpX chaperone family. HslU subfamily. A double ring-shaped homohexamer of HslV is capped on each side by a ring-shaped HslU homohexamer. The assembly of the HslU/HslV complex is dependent on binding of ATP.

The protein localises to the cytoplasm. ATPase subunit of a proteasome-like degradation complex; this subunit has chaperone activity. The binding of ATP and its subsequent hydrolysis by HslU are essential for unfolding of protein substrates subsequently hydrolyzed by HslV. HslU recognizes the N-terminal part of its protein substrates and unfolds these before they are guided to HslV for hydrolysis. This is ATP-dependent protease ATPase subunit HslU from Vibrio vulnificus (strain YJ016).